The sequence spans 358 residues: Phosphoserine aminotransferase (358 aa).

R43 is an L-glutamate binding site. Pyridoxal 5'-phosphate-binding residues include W103, T153, D172, and Q195. K196 carries the post-translational modification N6-(pyridoxal phosphate)lysine. 236–237 (NT) contributes to the pyridoxal 5'-phosphate binding site.

Belongs to the class-V pyridoxal-phosphate-dependent aminotransferase family. SerC subfamily. As to quaternary structure, homodimer. Pyridoxal 5'-phosphate serves as cofactor.

It localises to the cytoplasm. The enzyme catalyses O-phospho-L-serine + 2-oxoglutarate = 3-phosphooxypyruvate + L-glutamate. The catalysed reaction is 4-(phosphooxy)-L-threonine + 2-oxoglutarate = (R)-3-hydroxy-2-oxo-4-phosphooxybutanoate + L-glutamate. The protein operates within amino-acid biosynthesis; L-serine biosynthesis; L-serine from 3-phospho-D-glycerate: step 2/3. Its pathway is cofactor biosynthesis; pyridoxine 5'-phosphate biosynthesis; pyridoxine 5'-phosphate from D-erythrose 4-phosphate: step 3/5. Functionally, catalyzes the reversible conversion of 3-phosphohydroxypyruvate to phosphoserine and of 3-hydroxy-2-oxo-4-phosphonooxybutanoate to phosphohydroxythreonine. The polypeptide is Phosphoserine aminotransferase (Dichelobacter nodosus (strain VCS1703A)).